Reading from the N-terminus, the 224-residue chain is UPF0758 protein Neut_0782 (224 aa).

Residues 102 to 224 (IMDSPQSVRS…TVSFAERGLI (123 aa)) form the MPN domain. Positions 173, 175, and 186 each coordinate Zn(2+). The JAMM motif signature appears at 173–186 (HNHPSGVAEPSRAD).

Belongs to the UPF0758 family.

This Nitrosomonas eutropha (strain DSM 101675 / C91 / Nm57) protein is UPF0758 protein Neut_0782.